Here is a 105-residue protein sequence, read N- to C-terminus: Small ribosomal subunit protein uS10 (105 aa).

The protein belongs to the universal ribosomal protein uS10 family. In terms of assembly, part of the 30S ribosomal subunit.

Functionally, involved in the binding of tRNA to the ribosomes. This chain is Small ribosomal subunit protein uS10, found in Crocosphaera subtropica (strain ATCC 51142 / BH68) (Cyanothece sp. (strain ATCC 51142)).